Here is an 89-residue protein sequence, read N- to C-terminus: Small ribosomal subunit protein uS15 (89 aa).

It belongs to the universal ribosomal protein uS15 family. Part of the 30S ribosomal subunit. Forms a bridge to the 50S subunit in the 70S ribosome, contacting the 23S rRNA.

Its function is as follows. One of the primary rRNA binding proteins, it binds directly to 16S rRNA where it helps nucleate assembly of the platform of the 30S subunit by binding and bridging several RNA helices of the 16S rRNA. Functionally, forms an intersubunit bridge (bridge B4) with the 23S rRNA of the 50S subunit in the ribosome. The chain is Small ribosomal subunit protein uS15 from Mycolicibacterium vanbaalenii (strain DSM 7251 / JCM 13017 / BCRC 16820 / KCTC 9966 / NRRL B-24157 / PYR-1) (Mycobacterium vanbaalenii).